The chain runs to 159 residues: Phosphopantetheine adenylyltransferase (159 aa).

Thr10 provides a ligand contact to substrate. ATP is bound by residues 10-11 and His18; that span reads TF. Lys42, Met74, and Arg88 together coordinate substrate. ATP is bound by residues 89-91, Glu99, and 124-130; these read GLR and WSFISSS.

Belongs to the bacterial CoaD family. Homohexamer. The cofactor is Mg(2+).

The protein localises to the cytoplasm. The enzyme catalyses (R)-4'-phosphopantetheine + ATP + H(+) = 3'-dephospho-CoA + diphosphate. It participates in cofactor biosynthesis; coenzyme A biosynthesis; CoA from (R)-pantothenate: step 4/5. Functionally, reversibly transfers an adenylyl group from ATP to 4'-phosphopantetheine, yielding dephospho-CoA (dPCoA) and pyrophosphate. The protein is Phosphopantetheine adenylyltransferase of Salmonella typhimurium (strain LT2 / SGSC1412 / ATCC 700720).